Here is a 565-residue protein sequence, read N- to C-terminus: Deformed epidermal autoregulatory factor 1 homolog (565 aa).

2 disordered regions span residues 34 to 62 (GGEA…ETPR) and 162 to 190 (GLKG…KGGT). Residues 169-181 (PLTPGPQSPPTPL) show a composition bias toward pro residues. The residue at position 171 (threonine 171) is a Phosphothreonine. Serine 176 is subject to Phosphoserine. Threonine 179 carries the post-translational modification Phosphothreonine. An SAND domain is found at 193-273 (NWDPSVYDSE…QCLIQDGILN (81 aa)). Residues 301–316 (KRRKKENELPTTPVKK) carry the Nuclear localization signal motif. The interval 403 to 478 (IAPFPEAALP…QLKTLFEQAK (76 aa)) is interaction with LMO4. Threonine 432 bears the Phosphothreonine mark. Serine 448 is subject to Phosphoserine. Zn(2+) contacts are provided by cysteine 504, cysteine 507, cysteine 515, cysteine 518, cysteine 524, cysteine 528, histidine 536, and cysteine 540. Residues 504–540 (CVNCGREAMSECTGCHKVNYCSTFCQRKDWKDHQHIC) form an MYND-type zinc finger.

As to quaternary structure, homodimer. Isoform 1 and isoform 4 may form a heterodimer. Interacts with LMO2 and CLIM2. Interacts with LMO4; LMO4 blocks export from nucleus. May interact with the corepressors NCOR1 and NCRO2. Identified in a complex with the XRCC5 and XRCC6 heterodimer. Interacts (via the SAND domain) with the DNA-PK complex subunit XRCC6; the interaction is direct and may be inhibited by DNA-binding. May be phosphorylated by DNA-PK complex in a DNA independent manner (in vitro). As to expression, expressed in various tissues and cells such as in peripheral mononuclear cells and hormone-secreting pituitary cells. Expression in pancreatic lymph nodes of patients with type 1 diabetes is 20 times higher than in healthy controls. Highly expressed in fetal and adult brain.

The protein resides in the nucleus. Its subcellular location is the cytoplasm. It is found in the secreted. Its function is as follows. Transcription factor that binds to sequence with multiple copies of 5'-TTC[CG]G-3' present in its own promoter and that of the HNRPA2B1 gene. Down-regulates transcription of these genes. Binds to the retinoic acid response element (RARE) 5'-AGGGTTCACCGAAAGTTCA-3'. Activates the proenkephalin gene independently of promoter binding, probably through protein-protein interaction. When secreted, behaves as an inhibitor of cell proliferation, by arresting cells in the G0 or G1 phase. Required for neural tube closure and skeletal patterning. Regulates epithelial cell proliferation and side-branching in the mammary gland. Controls the expression of peripheral tissue antigens in pancreatic lymph nodes. Isoform 1 displays greater transcriptional activity than isoform 4. Isoform 4 may inhibit transcriptional activity of isoform 1 by interacting with isoform 1 and retaining it in the cytoplasm. Transcriptional activator of EIF4G3. This Homo sapiens (Human) protein is Deformed epidermal autoregulatory factor 1 homolog (DEAF1).